Here is a 745-residue protein sequence, read N- to C-terminus: Phosphoribosylformylglycinamidine synthase subunit PurL (745 aa).

The active site involves histidine 50. ATP-binding residues include tyrosine 53 and lysine 92. Mg(2+) is bound at residue glutamate 94. Substrate contacts are provided by residues 95-98 (SHNH) and arginine 117. Histidine 96 functions as the Proton acceptor in the catalytic mechanism. Aspartate 118 contributes to the Mg(2+) binding site. Residue glutamine 241 coordinates substrate. Position 269 (aspartate 269) interacts with Mg(2+). 313-315 (ESQ) is a binding site for substrate. Residues aspartate 495 and glycine 532 each contribute to the ATP site. Residue asparagine 533 coordinates Mg(2+). Residue serine 535 coordinates substrate.

The protein belongs to the FGAMS family. Monomer. Part of the FGAM synthase complex composed of 1 PurL, 1 PurQ and 2 PurS subunits.

Its subcellular location is the cytoplasm. It catalyses the reaction N(2)-formyl-N(1)-(5-phospho-beta-D-ribosyl)glycinamide + L-glutamine + ATP + H2O = 2-formamido-N(1)-(5-O-phospho-beta-D-ribosyl)acetamidine + L-glutamate + ADP + phosphate + H(+). Its pathway is purine metabolism; IMP biosynthesis via de novo pathway; 5-amino-1-(5-phospho-D-ribosyl)imidazole from N(2)-formyl-N(1)-(5-phospho-D-ribosyl)glycinamide: step 1/2. Part of the phosphoribosylformylglycinamidine synthase complex involved in the purines biosynthetic pathway. Catalyzes the ATP-dependent conversion of formylglycinamide ribonucleotide (FGAR) and glutamine to yield formylglycinamidine ribonucleotide (FGAM) and glutamate. The FGAM synthase complex is composed of three subunits. PurQ produces an ammonia molecule by converting glutamine to glutamate. PurL transfers the ammonia molecule to FGAR to form FGAM in an ATP-dependent manner. PurS interacts with PurQ and PurL and is thought to assist in the transfer of the ammonia molecule from PurQ to PurL. This chain is Phosphoribosylformylglycinamidine synthase subunit PurL, found in Allorhizobium ampelinum (strain ATCC BAA-846 / DSM 112012 / S4) (Agrobacterium vitis (strain S4)).